The primary structure comprises 583 residues: cAMP-dependent protein kinase catalytic subunit 3 (583 aa).

2 disordered regions span residues 51-75 and 98-264; these read ATPT…TIGK and SGTA…QTAK. Polar residues-rich tracts occupy residues 52–69 and 98–107; these read TPTQ…TGTP and SGTAGSTSKL. Residues 108–162 show a composition bias toward low complexity; that stretch reads TTGNGSGNTMTSAYKIPSNNSTTANDSSNTETTFTFKLGRSNGRSSSNVASSESS. Residues 163 to 176 show a composition bias toward acidic residues; that stretch reads DPLESDYSEEDPEQ. A compositionally biased stretch (low complexity) spans 181-200; that stretch reads PDPATNSRSSSTATTTTTSS. Positions 205–219 are enriched in acidic residues; the sequence is NDVDEEDEEDDENEG. The span at 221 to 234 shows a compositional bias: basic and acidic residues; sequence GNGRDADDATHDSS. The segment covering 235 to 256 has biased composition (acidic residues); the sequence is ESIEEDDGNETDDEEDDDESEE. The 255-residue stretch at 274 to 528 folds into the Protein kinase domain; sequence YQIIKTVGTG…ADDVKRHRWF (255 aa). ATP is bound by residues 280–288 and Lys303; that span reads VGTGTFGRV. The Proton acceptor role is filled by Asp397. In terms of domain architecture, AGC-kinase C-terminal spans 529-583; the sequence is KHLNWNDVYSKKLKPPILPDVHHDGDTKNFDDYPEKDWKPAKAVDQRDLQYFNDF.

The protein belongs to the protein kinase superfamily. AGC Ser/Thr protein kinase family. cAMP subfamily. As to expression, expressed in embryonic mesoderm, and the optic lamina, wing disk and leg disks of third instar larvae. More abundant in adult head than adult body.

The enzyme catalyses L-seryl-[protein] + ATP = O-phospho-L-seryl-[protein] + ADP + H(+). It catalyses the reaction L-threonyl-[protein] + ATP = O-phospho-L-threonyl-[protein] + ADP + H(+). Functionally, does not have an essential role in development. In Drosophila melanogaster (Fruit fly), this protein is cAMP-dependent protein kinase catalytic subunit 3 (Pka-C3).